A 55-amino-acid chain; its full sequence is uncharacterized protein (55 aa).

The protein resides in the plastid. This is an uncharacterized protein from Cuscuta reflexa (Southern Asian dodder).